The primary structure comprises 340 residues: Protein AC11 (340 aa).

Functionally, plays an essential role in nucleocapsid egress from the host nucleus to form the budded virion (BV). Does not participate in nucleocapsid formation. In Autographa californica nuclear polyhedrosis virus (AcMNPV), this protein is Protein AC11.